We begin with the raw amino-acid sequence, 99 residues long: MEYIYAALLLNSANKEVTEEAVKAVLVAGGIEANDARVKALVAALEGVDIAEAIAKAAIAPVAAAAPVAAAAAPAEVKKEEKKEDTTAAAAAGLGALFM.

Part of the 50S ribosomal subunit. Homodimer, it forms part of the ribosomal stalk which helps the ribosome interact with GTP-bound translation factors. Forms both a pentameric uL10/P0(P1)2(P1)2 and heptameric uL10/P0(P1)2(P1)2(P1)2 complex, where uL10/P0 forms an elongated spine to which the P1 dimers bind in a sequential fashion. The proportion of heptameric complexes increases during cell growth.

Forms part of the ribosomal stalk, playing a central role in the interaction of the ribosome with GTP-bound translation factors. This Methanococcus vannielii protein is Large ribosomal subunit protein P1.